The primary structure comprises 403 residues: NADH-quinone oxidoreductase subunit D (403 aa).

The protein belongs to the complex I 49 kDa subunit family. As to quaternary structure, NDH-1 is composed of 14 different subunits. Subunits NuoB, C, D, E, F, and G constitute the peripheral sector of the complex.

Its subcellular location is the cell inner membrane. The enzyme catalyses a quinone + NADH + 5 H(+)(in) = a quinol + NAD(+) + 4 H(+)(out). Functionally, NDH-1 shuttles electrons from NADH, via FMN and iron-sulfur (Fe-S) centers, to quinones in the respiratory chain. The immediate electron acceptor for the enzyme in this species is believed to be ubiquinone. Couples the redox reaction to proton translocation (for every two electrons transferred, four hydrogen ions are translocated across the cytoplasmic membrane), and thus conserves the redox energy in a proton gradient. The polypeptide is NADH-quinone oxidoreductase subunit D (Erythrobacter litoralis (strain HTCC2594)).